The primary structure comprises 112 residues: UPF0102 protein CHAB381_0216 (112 aa).

The protein belongs to the UPF0102 family.

This Campylobacter hominis (strain ATCC BAA-381 / DSM 21671 / CCUG 45161 / LMG 19568 / NCTC 13146 / CH001A) protein is UPF0102 protein CHAB381_0216.